The sequence spans 898 residues: Chloride channel protein 2 (898 aa).

Ala2 bears the N-acetylalanine mark. Residues 2–87 lie on the Cytoplasmic side of the membrane; it reads AAAAAEEGME…RCHKFLVSRV (86 aa). The interval 16-34 is essential for channel gating by both voltage and cell volume; it reads QYEQTLMYGRYTQDLGAFA. Thr20 carries the post-translational modification Phosphothreonine. Residues 36 to 49 form a modulates channel gating by both voltage and cell volume region; it reads EEAARIRLGGPEPW. 2 helical membrane passes run 88–121 and 130–155; these read GEDW…AQQW and ILLQ…TQIL. A Selectivity filter part_1 motif is present at residues 161–165; that stretch reads GSGIP. A chloride-binding site is contributed by Ser162. The helical intramembrane region spans 164 to 171; sequence IPEMKTIL. The next 2 helical transmembrane spans lie at 180–198 and 205–223; these read LTLK…ALGS and EGPF…SKFL. Residues 203-207 carry the Selectivity filter part_2 motif; the sequence is GKEGP. 2 intramembrane regions (helical) span residues 239–251 and 255–263; these read MLAA…VGCC and PIGGVLFSI. Transmembrane regions (helical) follow at residues 275 to 295, 321 to 349, 358 to 377, 429 to 449, and 457 to 480; these read YWRG…LAVW, LPAF…VQVM, FLMR…ISTL, ANVF…SALA, and GAFM…MAAW. Positions 457-461 match the Selectivity filter part_3 motif; that stretch reads GAFMP. Phe459 lines the chloride pocket. Positions 497–511 form an intramembrane region, helical; the sequence is GGYAVVGAAALAGAV. An intramembrane region (note=Loop between two helices) is located at residues 512–513; sequence TH. Residues 514 to 525 constitute an intramembrane region (helical); the sequence is TVSTAVIVFELT. Positions 526 to 530 form an intramembrane region, note=Loop between two helices; it reads GQIAH. The chain crosses the membrane as a helical span at residues 531–548; sequence ILPVMIAVILANAVAQSL. Residues 549-898 lie on the Cytoplasmic side of the membrane; the sequence is QPSLYDSIIR…SPSDSDDKCQ (350 aa). Tyr553 serves as a coordination point for chloride. A CBS 1 domain is found at 584–642; sequence MVRDVPHVALSCTFRDLRLALHRTKGRMLALVESPESMILLGSIERSQVVALLGAQLSP. Disordered regions lie at residues 643–672 and 686–717; these read ARRR…PEAS and AARG…TGSA. A compositionally biased stretch (polar residues) spans 705–717; the sequence is VTRNLGESPTGSA. Residues Ser712 and Ser758 each carry the phosphoserine modification. The region spanning 790–850 is the CBS 2 domain; that stretch reads IDPAPFQLVE…GSVTAQGVKV (61 aa). Residues 812 to 813 carry the Basolateral membrane sorting motif; it reads LL. The tract at residues 856–898 is disordered; it reads SFRDSATSSSDTETTEVHALWGPHSRHGLPREGSPSDSDDKCQ.

It belongs to the chloride channel (TC 2.A.49) family. ClC-2/CLCN2 subfamily. Homodimer. Interacts with auxiliary subunit HEPACAM. Post-translationally, phosphorylated. Activated by dephosphorylation. As to expression, ubiquitously expressed. Moderately expressed in aortic and coronary vascular smooth muscle cells and expressed at a low level in aortic endothelial cells. Expressed in the adrenal gland, predominantly in the zona glomerulosa. Expressed in white mater perivascular astrocytes and ependymal cells (at protein level).

Its subcellular location is the cell membrane. The protein resides in the basolateral cell membrane. It localises to the cell projection. The protein localises to the dendritic spine membrane. It is found in the axon. It catalyses the reaction chloride(in) = chloride(out). The catalysed reaction is thiocyanate(in) = thiocyanate(out). It carries out the reaction bromide(in) = bromide(out). The enzyme catalyses nitrate(in) = nitrate(out). It catalyses the reaction iodide(out) = iodide(in). Common gate kinetics are down-regulated by intracellular ATP. Inhibited by AK-42, a derivative of meclofenamate. Inhibited by Cd(2+). Inhibited by Zn(2+) and PKC activation. Inhibited at acidic pH. CCLN2:HEPACAM channel conductance is up-regulated upon hypo-osmolarity. Its function is as follows. Voltage-gated and osmosensitive chloride channel. Forms a homodimeric channel where each subunit has its own ion conduction pathway. Conducts double-barreled currents controlled by two types of gates, two fast glutamate gates that control each subunit independently and a slow common gate that opens and shuts off both subunits simultaneously. Displays inward rectification currents activated upon membrane hyperpolarization and extracellular hypotonicity. Contributes to chloride conductance involved in neuron excitability. In hippocampal neurons, generates a significant part of resting membrane conductance and provides an additional chloride efflux pathway to prevent chloride accumulation in dendrites upon GABA receptor activation. In glia, associates with the auxiliary subunit HEPACAM/GlialCAM at astrocytic processes and myelinated fiber tracts where it may regulate transcellular chloride flux buffering extracellular chloride and potassium concentrations. Regulates aldosterone production in adrenal glands. The opening of CLCN2 channels at hyperpolarized membrane potentials in the glomerulosa causes cell membrane depolarization, activation of voltage-gated calcium channels and increased expression of aldosterone synthase, the rate-limiting enzyme for aldosterone biosynthesis. Contributes to chloride conductance in retinal pigment epithelium involved in phagocytosis of shed photoreceptor outer segments and photoreceptor renewal. Conducts chloride currents at the basolateral membrane of epithelial cells with a role in chloride reabsorption rather than secretion. Permeable to small monovalent anions with chloride &gt; thiocyanate &gt; bromide &gt; nitrate &gt; iodide ion selectivity. This is Chloride channel protein 2 from Homo sapiens (Human).